The chain runs to 368 residues: Cytochrome-c peroxidase IdrP2 (368 aa).

A signal peptide spans 1–27 (MKWHRGRLTQTLGAMGLTATLTVAAQA). Cytochrome c domains lie at 48–158 (AMIE…ALWQ) and 201–346 (KEAQ…LTLS). The heme c site is built by Cys-70, Cys-73, His-74, Cys-216, Cys-219, and His-220.

As to quaternary structure, the iodate reductase (Idr) complex is composed of a molybdopterin-dependent iodate reductase (IdrA and IdrB subunits) and two associated peroxidases (IdrP1 and IdrP2). Heme c is required as a cofactor.

The protein localises to the periplasm. It carries out the reaction 2 Fe(II)-[cytochrome c] + H2O2 + 2 H(+) = 2 Fe(III)-[cytochrome c] + 2 H2O. Functionally, involved in iodate respiration. Probably reduces the H(2)O(2) produced by IdrA/IdrB to H(2)O, using a reduced cytochrome c as the electron donor. The polypeptide is Cytochrome-c peroxidase IdrP2 (Pseudomonas sp. (strain SCT)).